The primary structure comprises 237 residues: HTH-type transcriptional regulator GmuR (237 aa).

The HTH gntR-type domain maps to 1-69 (MNKYEIIANE…RGHGTFIIQS (69 aa)). A DNA-binding region (H-T-H motif) is located at residues 29 to 48 (EVSLAKEFNSSRMTMKRALD).

Its subcellular location is the cytoplasm. Its function is as follows. Transcriptional repressor of the gmuBACDREFG operon which is involved in the uptake and degradation of glucomannan. This Bacillus subtilis (strain 168) protein is HTH-type transcriptional regulator GmuR (gmuR).